The sequence spans 337 residues: tRNA N6-adenosine threonylcarbamoyltransferase (337 aa).

Residues H111 and H115 each contribute to the Fe cation site. Residues 134–138 (LVSGG), D167, G180, and N272 each bind substrate. D300 lines the Fe cation pocket.

Belongs to the KAE1 / TsaD family. The cofactor is Fe(2+).

The protein localises to the cytoplasm. The catalysed reaction is L-threonylcarbamoyladenylate + adenosine(37) in tRNA = N(6)-L-threonylcarbamoyladenosine(37) in tRNA + AMP + H(+). In terms of biological role, required for the formation of a threonylcarbamoyl group on adenosine at position 37 (t(6)A37) in tRNAs that read codons beginning with adenine. Is involved in the transfer of the threonylcarbamoyl moiety of threonylcarbamoyl-AMP (TC-AMP) to the N6 group of A37, together with TsaE and TsaB. TsaD likely plays a direct catalytic role in this reaction. The polypeptide is tRNA N6-adenosine threonylcarbamoyltransferase (Cronobacter sakazakii (strain ATCC BAA-894) (Enterobacter sakazakii)).